Reading from the N-terminus, the 76-residue chain is uncharacterized protein (76 aa).

The helical transmembrane segment at 18-38 (FISALFFFNAVCIVSDNLLII) threads the bilayer.

It localises to the cell membrane. This is an uncharacterized protein from Escherichia coli O6:H1 (strain CFT073 / ATCC 700928 / UPEC).